A 460-amino-acid polypeptide reads, in one-letter code: ATP synthase subunit beta (460 aa).

Residue 150-157 (GGAGVGKT) coordinates ATP.

It belongs to the ATPase alpha/beta chains family. F-type ATPases have 2 components, CF(1) - the catalytic core - and CF(0) - the membrane proton channel. CF(1) has five subunits: alpha(3), beta(3), gamma(1), delta(1), epsilon(1). CF(0) has three main subunits: a(1), b(2) and c(9-12). The alpha and beta chains form an alternating ring which encloses part of the gamma chain. CF(1) is attached to CF(0) by a central stalk formed by the gamma and epsilon chains, while a peripheral stalk is formed by the delta and b chains.

The protein localises to the cell inner membrane. The catalysed reaction is ATP + H2O + 4 H(+)(in) = ADP + phosphate + 5 H(+)(out). Functionally, produces ATP from ADP in the presence of a proton gradient across the membrane. The catalytic sites are hosted primarily by the beta subunits. In Yersinia pestis bv. Antiqua (strain Angola), this protein is ATP synthase subunit beta.